A 786-amino-acid polypeptide reads, in one-letter code: Endonuclease MutS2 (786 aa).

335 to 342 (GPNTGGKT) serves as a coordination point for ATP. The region spanning 711–786 (LDLRGERFEN…GLGVTVVELK (76 aa)) is the Smr domain.

Belongs to the DNA mismatch repair MutS family. MutS2 subfamily. Homodimer. Binds to stalled ribosomes, contacting rRNA.

Its function is as follows. Endonuclease that is involved in the suppression of homologous recombination and thus may have a key role in the control of bacterial genetic diversity. Acts as a ribosome collision sensor, splitting the ribosome into its 2 subunits. Detects stalled/collided 70S ribosomes which it binds and splits by an ATP-hydrolysis driven conformational change. Acts upstream of the ribosome quality control system (RQC), a ribosome-associated complex that mediates the extraction of incompletely synthesized nascent chains from stalled ribosomes and their subsequent degradation. Probably generates substrates for RQC. This Bacillus cereus (strain ATCC 10987 / NRS 248) protein is Endonuclease MutS2.